Here is a 255-residue protein sequence, read N- to C-terminus: Ribosomal RNA small subunit methyltransferase J (255 aa).

S-adenosyl-L-methionine is bound by residues 107–108, 123–124, and Asp-178; these read RD and ER. Positions 228–247 are disordered; the sequence is ARAEPLSGRKPSHQIPGKTT.

It belongs to the methyltransferase superfamily. RsmJ family.

Its subcellular location is the cytoplasm. It carries out the reaction guanosine(1516) in 16S rRNA + S-adenosyl-L-methionine = N(2)-methylguanosine(1516) in 16S rRNA + S-adenosyl-L-homocysteine + H(+). In terms of biological role, specifically methylates the guanosine in position 1516 of 16S rRNA. In Thioalkalivibrio sulfidiphilus (strain HL-EbGR7), this protein is Ribosomal RNA small subunit methyltransferase J.